The chain runs to 177 residues: Large ribosomal subunit protein uL6 (177 aa).

The protein belongs to the universal ribosomal protein uL6 family. As to quaternary structure, part of the 50S ribosomal subunit.

This protein binds to the 23S rRNA, and is important in its secondary structure. It is located near the subunit interface in the base of the L7/L12 stalk, and near the tRNA binding site of the peptidyltransferase center. In Natronomonas pharaonis (strain ATCC 35678 / DSM 2160 / CIP 103997 / JCM 8858 / NBRC 14720 / NCIMB 2260 / Gabara) (Halobacterium pharaonis), this protein is Large ribosomal subunit protein uL6.